A 729-amino-acid polypeptide reads, in one-letter code: Polyribonucleotide nucleotidyltransferase (729 aa).

Mg(2+) is bound by residues Asp485 and Asp491. One can recognise a KH domain in the interval 552-611; that stretch reads PRITTMKVAEDKIRTIIGKGGATIKGLIESTGVSIDIDDSGVIQLFSPDKMALEEAQKQI. The S1 motif domain maps to 621 to 689; sequence GQTYQGKVSK…KQGRVKLEWK (69 aa).

The protein belongs to the polyribonucleotide nucleotidyltransferase family. As to quaternary structure, component of the RNA degradosome, which is a multiprotein complex involved in RNA processing and mRNA degradation. Mg(2+) serves as cofactor.

Its subcellular location is the cytoplasm. The enzyme catalyses RNA(n+1) + phosphate = RNA(n) + a ribonucleoside 5'-diphosphate. Its function is as follows. Involved in mRNA degradation. Catalyzes the phosphorolysis of single-stranded polyribonucleotides processively in the 3'- to 5'-direction. This is Polyribonucleotide nucleotidyltransferase from Legionella pneumophila (strain Corby).